The sequence spans 359 residues: Uracil-DNA glycosylase (359 aa).

A mitochondrion-targeting transit peptide spans 1–21; it reads MWCMRRLPTNSVMTVARKRKQ. D162 functions as the Proton acceptor in the catalytic mechanism.

The protein belongs to the uracil-DNA glycosylase (UDG) superfamily. UNG family.

Its subcellular location is the mitochondrion. It localises to the nucleus. It catalyses the reaction Hydrolyzes single-stranded DNA or mismatched double-stranded DNA and polynucleotides, releasing free uracil.. Functionally, excises uracil residues from the DNA which can arise as a result of misincorporation of dUMP residues by DNA polymerase or due to deamination of cytosine. Not involved in strand-directed mismatch repair. In Saccharomyces cerevisiae (strain ATCC 204508 / S288c) (Baker's yeast), this protein is Uracil-DNA glycosylase.